A 575-amino-acid chain; its full sequence is Alpha-(1,6)-fucosyltransferase (575 aa).

Topologically, residues 1–9 (MRPWTGSWR) are cytoplasmic. The helical; Signal-anchor for type II membrane protein transmembrane segment at 10–30 (WIMLILFAWGTLLFYIGGHLV) threads the bilayer. Topologically, residues 31-575 (RDNDHPDHSS…KYPTYPEAEK (545 aa)) are lumenal. 3 cysteine pairs are disulfide-bonded: C204/C266, C212/C230, and C218/C222. The region spanning 206–493 (KAKKLVCNIN…PDASANFHSL (288 aa)) is the GT23 domain. S278 bears the Phosphoserine mark. Positions 299–305 (PRPPYLP) match the SH3-binding motif. Positions 365–366 (RR) are important for donor substrate binding. Cysteines 465 and 472 form a disulfide. Positions 502–563 (QNAHNQIAIY…PSYKVREKIE (62 aa)) constitute an SH3 domain.

The protein belongs to the glycosyltransferase 23 family. In terms of processing, tyrosine phosphorylated by PKDCC/VLK.

It is found in the golgi apparatus. Its subcellular location is the golgi stack membrane. The catalysed reaction is N(4)-{beta-D-GlcNAc-(1-&gt;2)-alpha-D-Man-(1-&gt;3)-[beta-D-GlcNAc-(1-&gt;2)-alpha-D-Man-(1-&gt;6)]-beta-D-Man-(1-&gt;4)-beta-D-GlcNAc-(1-&gt;4)-beta-D-GlcNAc}-L-asparaginyl-[protein] + GDP-beta-L-fucose = an N(4)-{beta-D-GlcNAc-(1-&gt;2)-alpha-D-Man-(1-&gt;3)-[beta-D-GlcNAc-(1-&gt;2)-alpha-D-Man-(1-&gt;6)]-beta-D-Man-(1-&gt;4)-beta-D-GlcNAc-(1-&gt;4)-[alpha-L-Fuc-(1-&gt;6)]-beta-D-GlcNAc}-L-asparaginyl-[protein] + GDP + H(+). It participates in protein modification; protein glycosylation. Its function is as follows. Catalyzes the addition of fucose in alpha 1-6 linkage to the first GlcNAc residue, next to the peptide chains in N-glycans. This Canis lupus familiaris (Dog) protein is Alpha-(1,6)-fucosyltransferase (FUT8).